A 308-amino-acid chain; its full sequence is Porphobilinogen deaminase (308 aa).

The residue at position 240 (C240) is an S-(dipyrrolylmethanemethyl)cysteine.

The protein belongs to the HMBS family. In terms of assembly, monomer. Dipyrromethane serves as cofactor.

It carries out the reaction 4 porphobilinogen + H2O = hydroxymethylbilane + 4 NH4(+). The protein operates within porphyrin-containing compound metabolism; protoporphyrin-IX biosynthesis; coproporphyrinogen-III from 5-aminolevulinate: step 2/4. In terms of biological role, tetrapolymerization of the monopyrrole PBG into the hydroxymethylbilane pre-uroporphyrinogen in several discrete steps. This chain is Porphobilinogen deaminase, found in Campylobacter hominis (strain ATCC BAA-381 / DSM 21671 / CCUG 45161 / LMG 19568 / NCTC 13146 / CH001A).